Reading from the N-terminus, the 192-residue chain is Adenylate kinase (192 aa).

10-15 provides a ligand contact to ATP; it reads GAGKGT. The NMP stretch occupies residues 30-59; sequence STGDMLREVIAKETEVGKKAKAIISSGALV. AMP contacts are provided by residues threonine 31, arginine 36, 57–59, 85–88, and glutamine 92; these read ALV and GYPR. Residues 126-142 form an LID region; sequence RRVQETVAAGGQVRLDD. Arginine 127 contributes to the ATP binding site. Arginine 139 and arginine 150 together coordinate AMP. Isoleucine 178 provides a ligand contact to ATP.

This sequence belongs to the adenylate kinase family. In terms of assembly, monomer.

Its subcellular location is the cytoplasm. It catalyses the reaction AMP + ATP = 2 ADP. It participates in purine metabolism; AMP biosynthesis via salvage pathway; AMP from ADP: step 1/1. In terms of biological role, catalyzes the reversible transfer of the terminal phosphate group between ATP and AMP. Plays an important role in cellular energy homeostasis and in adenine nucleotide metabolism. The polypeptide is Adenylate kinase (Bartonella tribocorum (strain CIP 105476 / IBS 506)).